The primary structure comprises 1518 residues: Probable serine/threonine-protein kinase HSL1 (1518 aa).

Disordered regions lie at residues 1-43 (MTGH…GHLE) and 55-83 (RLSQ…PWKL). A compositionally biased stretch (polar residues) spans 55 to 68 (RLSQPDSTVSVATK). A Protein kinase domain is found at 81–369 (WKLGKTLGKG…TQEILKHPLI (289 aa)). ATP-binding positions include 87–95 (LGKGSSGRV) and K110. Residue D239 is the Proton acceptor of the active site. Residues 467–502 (LSSSSENKKSATESSVNEPRIEYASKTANNTGLRSE) form a disordered region. The span at 492 to 501 (KTANNTGLRS) shows a compositional bias: polar residues. Position 511 is a phosphoserine (S511). A compositionally biased stretch (low complexity) spans 599-611 (SNSRLSLSASTSR). Residues 599–651 (SNSRLSLSASTSRETVHDNEMPLPQLPKSPSRYSLSRRAIHASPSTKSIHKSL) form a disordered region. Phosphoserine is present on residues S629 and S685. Residues 741-783 (EEEDNEKERDTQRQRQNDTKSSADTFTISGVSTNKENEGPEYP) are disordered. Residues 746-758 (EKERDTQRQRQND) show a composition bias toward basic and acidic residues. Residues 759-774 (TKSSADTFTISGVSTN) are compositionally biased toward polar residues. Residues S837 and S866 each carry the phosphoserine modification. A compositionally biased stretch (basic and acidic residues) spans 856–876 (EQLQKKNDRPSPLKPIQHQEL). Disordered stretches follow at residues 856–898 (EQLQ…RRNI), 1005–1030 (DDKH…KQSA), 1150–1170 (APSD…RASV), and 1220–1243 (SPEN…RDSN). Position 1220 is a phosphoserine (S1220). Polar residues predominate over residues 1222-1243 (ENPSNTHMQKRFSSTRGSRDSN). Position 1250 is a phosphoserine (S1250). The segment at 1259 to 1291 (EEDQDGHTSQADILESSMSYSKRRPSEESVNPK) is disordered. Over residues 1265 to 1278 (HTSQADILESSMSY) the composition is skewed to polar residues. Residues S1284, S1287, and S1325 each carry the phosphoserine modification.

Belongs to the protein kinase superfamily. CAMK Ser/Thr protein kinase family. NIM1 subfamily.

It localises to the bud neck. The catalysed reaction is L-seryl-[protein] + ATP = O-phospho-L-seryl-[protein] + ADP + H(+). It carries out the reaction L-threonyl-[protein] + ATP = O-phospho-L-threonyl-[protein] + ADP + H(+). The polypeptide is Probable serine/threonine-protein kinase HSL1 (HSL1) (Saccharomyces cerevisiae (strain ATCC 204508 / S288c) (Baker's yeast)).